A 377-amino-acid polypeptide reads, in one-letter code: Queuine tRNA-ribosyltransferase (377 aa).

Asp94 serves as the catalytic Proton acceptor. Residues 94–98, Asp148, Gln191, and Gly218 contribute to the substrate site; that span reads DSGGF. The RNA binding stretch occupies residues 249–255; that stretch reads GVGTPDD. The active-site Nucleophile is Asp268. Residues 273–277 form an RNA binding; important for wobble base 34 recognition region; that stretch reads TRAGR.

It belongs to the queuine tRNA-ribosyltransferase family. As to quaternary structure, homodimer. Within each dimer, one monomer is responsible for RNA recognition and catalysis, while the other monomer binds to the replacement base PreQ1.

It carries out the reaction 7-aminomethyl-7-carbaguanine + guanosine(34) in tRNA = 7-aminomethyl-7-carbaguanosine(34) in tRNA + guanine. The protein operates within tRNA modification; tRNA-queuosine biosynthesis. In terms of biological role, catalyzes the base-exchange of a guanine (G) residue with the queuine precursor 7-aminomethyl-7-deazaguanine (PreQ1) at position 34 (anticodon wobble position) in tRNAs with GU(N) anticodons (tRNA-Asp, -Asn, -His and -Tyr). Catalysis occurs through a double-displacement mechanism. The nucleophile active site attacks the C1' of nucleotide 34 to detach the guanine base from the RNA, forming a covalent enzyme-RNA intermediate. The proton acceptor active site deprotonates the incoming PreQ1, allowing a nucleophilic attack on the C1' of the ribose to form the product. After dissociation, two additional enzymatic reactions on the tRNA convert PreQ1 to queuine (Q), resulting in the hypermodified nucleoside queuosine (7-(((4,5-cis-dihydroxy-2-cyclopenten-1-yl)amino)methyl)-7-deazaguanosine). This chain is Queuine tRNA-ribosyltransferase, found in Brucella melitensis biotype 1 (strain ATCC 23456 / CCUG 17765 / NCTC 10094 / 16M).